Reading from the N-terminus, the 379-residue chain is Anhydro-N-acetylmuramic acid kinase (379 aa).

9–16 (GTSADGVD) serves as a coordination point for ATP.

It belongs to the anhydro-N-acetylmuramic acid kinase family.

The enzyme catalyses 1,6-anhydro-N-acetyl-beta-muramate + ATP + H2O = N-acetyl-D-muramate 6-phosphate + ADP + H(+). Its pathway is amino-sugar metabolism; 1,6-anhydro-N-acetylmuramate degradation. The protein operates within cell wall biogenesis; peptidoglycan recycling. Catalyzes the specific phosphorylation of 1,6-anhydro-N-acetylmuramic acid (anhMurNAc) with the simultaneous cleavage of the 1,6-anhydro ring, generating MurNAc-6-P. Is required for the utilization of anhMurNAc either imported from the medium or derived from its own cell wall murein, and thus plays a role in cell wall recycling. The protein is Anhydro-N-acetylmuramic acid kinase of Parasynechococcus marenigrum (strain WH8102).